The sequence spans 186 residues: Ribosome-recycling factor (186 aa).

It belongs to the RRF family.

It is found in the cytoplasm. Responsible for the release of ribosomes from messenger RNA at the termination of protein biosynthesis. May increase the efficiency of translation by recycling ribosomes from one round of translation to another. This chain is Ribosome-recycling factor, found in Phocaeicola vulgatus (strain ATCC 8482 / DSM 1447 / JCM 5826 / CCUG 4940 / NBRC 14291 / NCTC 11154) (Bacteroides vulgatus).